We begin with the raw amino-acid sequence, 588 residues long: Transcription factor 7-like 1 (588 aa).

Residues 1–31 (MPQLGGGGGGGGGGSGGGGGSSAGAAGGGDD) are compositionally biased toward gly residues. Residues 1-74 (MPQLGGGGGG…VKSSLVNESE (74 aa)) are CTNNB1-binding. 3 disordered regions span residues 1 to 101 (MPQL…PRDY), 203 to 234 (SPGS…SPYY), and 409 to 506 (LYPT…LSLT). Residues 67 to 81 (SSLVNESENQSSSSD) show a composition bias toward low complexity. A compositionally biased stretch (basic and acidic residues) spans 83–101 (EAERRPQPVRDTFQKPRDY). Residues 346–414 (VKKPLNAFML…LHSQLYPTWS (69 aa)) constitute a DNA-binding region (HMG box). Residues 421 to 427 (KKKKRKR) carry the Nuclear localization signal motif. 2 stretches are compositionally biased toward low complexity: residues 431-441 (LSQTQSQQQVQ) and 478-497 (SPAT…ATHS).

It belongs to the TCF/LEF family. In terms of assembly, binds the armadillo repeat of CTNNB1 and forms a stable complex. Interacts with DAZAP2. Detected in hair follicles and skin keratinocytes, and at lower levels in stomach epithelium.

It localises to the nucleus. Functionally, participates in the Wnt signaling pathway. Binds to DNA and acts as a repressor in the absence of CTNNB1, and as an activator in its presence. Necessary for the terminal differentiation of epidermal cells, the formation of keratohyalin granules and the development of the barrier function of the epidermis. Down-regulates NQO1, leading to increased mitomycin c resistance. This chain is Transcription factor 7-like 1 (TCF7L1), found in Homo sapiens (Human).